The following is a 160-amino-acid chain: 6,7-dimethyl-8-ribityllumazine synthase (160 aa).

5-amino-6-(D-ribitylamino)uracil is bound by residues W28, 59 to 61, and 82 to 84; these read SFE and VII. 87-88 serves as a coordination point for (2S)-2-hydroxy-3-oxobutyl phosphate; sequence GT. H90 functions as the Proton donor in the catalytic mechanism. F115 is a 5-amino-6-(D-ribitylamino)uracil binding site. R129 contributes to the (2S)-2-hydroxy-3-oxobutyl phosphate binding site.

It belongs to the DMRL synthase family.

The catalysed reaction is (2S)-2-hydroxy-3-oxobutyl phosphate + 5-amino-6-(D-ribitylamino)uracil = 6,7-dimethyl-8-(1-D-ribityl)lumazine + phosphate + 2 H2O + H(+). The protein operates within cofactor biosynthesis; riboflavin biosynthesis; riboflavin from 2-hydroxy-3-oxobutyl phosphate and 5-amino-6-(D-ribitylamino)uracil: step 1/2. In terms of biological role, catalyzes the formation of 6,7-dimethyl-8-ribityllumazine by condensation of 5-amino-6-(D-ribitylamino)uracil with 3,4-dihydroxy-2-butanone 4-phosphate. This is the penultimate step in the biosynthesis of riboflavin. The protein is 6,7-dimethyl-8-ribityllumazine synthase of Clavibacter michiganensis subsp. michiganensis (strain NCPPB 382).